A 541-amino-acid chain; its full sequence is Chaperonin GroEL 2 (541 aa).

ATP contacts are provided by residues 29 to 32 (TLGP), 86 to 90 (DGTTT), Gly-413, 476 to 478 (NAA), and Asp-492.

This sequence belongs to the chaperonin (HSP60) family. Forms a cylinder of 14 subunits composed of two heptameric rings stacked back-to-back. Interacts with the co-chaperonin GroES.

The protein localises to the secreted. Its subcellular location is the capsule. It localises to the cell surface. The protein resides in the cell wall. It carries out the reaction ATP + H2O + a folded polypeptide = ADP + phosphate + an unfolded polypeptide.. Together with its co-chaperonin GroES, plays an essential role in assisting protein folding. The GroEL-GroES system forms a nano-cage that allows encapsulation of the non-native substrate proteins and provides a physical environment optimized to promote and accelerate protein folding. This Mycobacterium avium (strain 104) protein is Chaperonin GroEL 2.